The following is a 454-amino-acid chain: Ribosomal protein uS12 methylthiotransferase RimO (454 aa).

The MTTase N-terminal domain maps to 14 to 125 (SKVAFSHVGC…IAKVLDRVEK (112 aa)). [4Fe-4S] cluster-binding residues include Cys23, Cys59, Cys88, Cys163, Cys167, and Cys170. The Radical SAM core domain maps to 149–378 (DKNKFVAYLR…ISVQQNISKD (230 aa)). One can recognise a TRAM domain in the interval 381 to 452 (QSYVGSKMKI…EYDLYGETLK (72 aa)).

It belongs to the methylthiotransferase family. RimO subfamily. [4Fe-4S] cluster serves as cofactor.

The protein resides in the cytoplasm. It carries out the reaction L-aspartate(89)-[ribosomal protein uS12]-hydrogen + (sulfur carrier)-SH + AH2 + 2 S-adenosyl-L-methionine = 3-methylsulfanyl-L-aspartate(89)-[ribosomal protein uS12]-hydrogen + (sulfur carrier)-H + 5'-deoxyadenosine + L-methionine + A + S-adenosyl-L-homocysteine + 2 H(+). Catalyzes the methylthiolation of an aspartic acid residue of ribosomal protein uS12. This Prochlorococcus marinus (strain MIT 9215) protein is Ribosomal protein uS12 methylthiotransferase RimO.